We begin with the raw amino-acid sequence, 146 residues long: ATP synthase epsilon chain (146 aa).

It belongs to the ATPase epsilon chain family. As to quaternary structure, F-type ATPases have 2 components, CF(1) - the catalytic core - and CF(0) - the membrane proton channel. CF(1) has five subunits: alpha(3), beta(3), gamma(1), delta(1), epsilon(1). CF(0) has three main subunits: a, b and c.

It localises to the cell inner membrane. Produces ATP from ADP in the presence of a proton gradient across the membrane. The chain is ATP synthase epsilon chain from Rhodospirillum centenum (strain ATCC 51521 / SW).